Consider the following 133-residue polypeptide: Ribosome-binding factor A (133 aa).

The protein belongs to the RbfA family. Monomer. Binds 30S ribosomal subunits, but not 50S ribosomal subunits or 70S ribosomes.

It localises to the cytoplasm. Its function is as follows. One of several proteins that assist in the late maturation steps of the functional core of the 30S ribosomal subunit. Associates with free 30S ribosomal subunits (but not with 30S subunits that are part of 70S ribosomes or polysomes). Required for efficient processing of 16S rRNA. May interact with the 5'-terminal helix region of 16S rRNA. In Acinetobacter baumannii (strain ACICU), this protein is Ribosome-binding factor A.